A 279-amino-acid polypeptide reads, in one-letter code: Acetyl-coenzyme A carboxylase carboxyl transferase subunit beta (279 aa).

Positions 23-279 (LWSKCDECGA…LIKLFKHLRG (257 aa)) constitute a CoA carboxyltransferase N-terminal domain. Residues Cys-27, Cys-30, Cys-46, and Cys-49 each contribute to the Zn(2+) site. Residues 27–49 (CDECGAALHKKQLEDHLYTCPEC) form a C4-type zinc finger.

It belongs to the AccD/PCCB family. Acetyl-CoA carboxylase is a heterohexamer composed of biotin carboxyl carrier protein (AccB), biotin carboxylase (AccC) and two subunits each of ACCase subunit alpha (AccA) and ACCase subunit beta (AccD). Zn(2+) is required as a cofactor.

Its subcellular location is the cytoplasm. It carries out the reaction N(6)-carboxybiotinyl-L-lysyl-[protein] + acetyl-CoA = N(6)-biotinyl-L-lysyl-[protein] + malonyl-CoA. The protein operates within lipid metabolism; malonyl-CoA biosynthesis; malonyl-CoA from acetyl-CoA: step 1/1. Functionally, component of the acetyl coenzyme A carboxylase (ACC) complex. Biotin carboxylase (BC) catalyzes the carboxylation of biotin on its carrier protein (BCCP) and then the CO(2) group is transferred by the transcarboxylase to acetyl-CoA to form malonyl-CoA. The chain is Acetyl-coenzyme A carboxylase carboxyl transferase subunit beta from Chlorobaculum parvum (strain DSM 263 / NCIMB 8327) (Chlorobium vibrioforme subsp. thiosulfatophilum).